The following is a 407-amino-acid chain: Imidazolonepropionase (407 aa).

Fe(3+) is bound by residues H75 and H77. H75 and H77 together coordinate Zn(2+). 4-imidazolone-5-propanoate is bound by residues R84, Y147, and H180. Y147 lines the N-formimidoyl-L-glutamate pocket. Residue H245 coordinates Fe(3+). Position 245 (H245) interacts with Zn(2+). Q248 provides a ligand contact to 4-imidazolone-5-propanoate. D320 is a Fe(3+) binding site. D320 is a Zn(2+) binding site. N-formimidoyl-L-glutamate contacts are provided by N322 and G324. S325 lines the 4-imidazolone-5-propanoate pocket.

Belongs to the metallo-dependent hydrolases superfamily. HutI family. The cofactor is Zn(2+). Fe(3+) is required as a cofactor.

Its subcellular location is the cytoplasm. It catalyses the reaction 4-imidazolone-5-propanoate + H2O = N-formimidoyl-L-glutamate. Its pathway is amino-acid degradation; L-histidine degradation into L-glutamate; N-formimidoyl-L-glutamate from L-histidine: step 3/3. Its function is as follows. Catalyzes the hydrolytic cleavage of the carbon-nitrogen bond in imidazolone-5-propanoate to yield N-formimidoyl-L-glutamate. It is the third step in the universal histidine degradation pathway. The sequence is that of Imidazolonepropionase from Pseudoalteromonas atlantica (strain T6c / ATCC BAA-1087).